The following is a 94-amino-acid chain: Co-chaperonin GroES (94 aa).

This sequence belongs to the GroES chaperonin family. In terms of assembly, heptamer of 7 subunits arranged in a ring. Interacts with the chaperonin GroEL.

It localises to the cytoplasm. Its function is as follows. Together with the chaperonin GroEL, plays an essential role in assisting protein folding. The GroEL-GroES system forms a nano-cage that allows encapsulation of the non-native substrate proteins and provides a physical environment optimized to promote and accelerate protein folding. GroES binds to the apical surface of the GroEL ring, thereby capping the opening of the GroEL channel. In Bacillus cytotoxicus (strain DSM 22905 / CIP 110041 / 391-98 / NVH 391-98), this protein is Co-chaperonin GroES.